We begin with the raw amino-acid sequence, 209 residues long: Chromophore lyase CpcT/CpeT 1 (209 aa).

It belongs to the CpcT/CpeT biliprotein lyase family.

In terms of biological role, covalently attaches a chromophore to Cys residue(s) of phycobiliproteins. The protein is Chromophore lyase CpcT/CpeT 1 of Trichodesmium erythraeum (strain IMS101).